Consider the following 616-residue polypeptide: Chaperone protein HscA (616 aa).

It belongs to the heat shock protein 70 family.

Chaperone involved in the maturation of iron-sulfur cluster-containing proteins. Has a low intrinsic ATPase activity which is markedly stimulated by HscB. Involved in the maturation of IscU. The sequence is that of Chaperone protein HscA from Klebsiella pneumoniae (strain 342).